Consider the following 249-residue polypeptide: Probable transcriptional regulatory protein Tgr7_2237 (249 aa).

Belongs to the TACO1 family.

Its subcellular location is the cytoplasm. The polypeptide is Probable transcriptional regulatory protein Tgr7_2237 (Thioalkalivibrio sulfidiphilus (strain HL-EbGR7)).